We begin with the raw amino-acid sequence, 326 residues long: GTP 3',8-cyclase (326 aa).

Residues 7–240 (AFARKFYYLR…AQVFHHSDYQ (234 aa)) form the Radical SAM core domain. Residue Arg16 participates in GTP binding. Residues Cys23 and Cys27 each contribute to the [4Fe-4S] cluster site. Tyr29 contacts S-adenosyl-L-methionine. Cys30 lines the [4Fe-4S] cluster pocket. Residue Arg65 participates in GTP binding. S-adenosyl-L-methionine is bound at residue Gly69. Thr96 is a GTP binding site. Position 120 (Ser120) interacts with S-adenosyl-L-methionine. Lys157 contributes to the GTP binding site. Met191 is an S-adenosyl-L-methionine binding site. Residues Cys254 and Cys257 each coordinate [4Fe-4S] cluster. 259–261 (RLR) contributes to the GTP binding site. Cys271 lines the [4Fe-4S] cluster pocket.

The protein belongs to the radical SAM superfamily. MoaA family. As to quaternary structure, monomer and homodimer. It depends on [4Fe-4S] cluster as a cofactor.

It catalyses the reaction GTP + AH2 + S-adenosyl-L-methionine = (8S)-3',8-cyclo-7,8-dihydroguanosine 5'-triphosphate + 5'-deoxyadenosine + L-methionine + A + H(+). Its pathway is cofactor biosynthesis; molybdopterin biosynthesis. Its function is as follows. Catalyzes the cyclization of GTP to (8S)-3',8-cyclo-7,8-dihydroguanosine 5'-triphosphate. This Yersinia pestis protein is GTP 3',8-cyclase.